A 190-amino-acid chain; its full sequence is Potassium-transporting ATPase KdpC subunit (190 aa).

Residues 10–30 (TFLFLLLITGGVYPLLTTALG) traverse the membrane as a helical segment.

Belongs to the KdpC family. In terms of assembly, the system is composed of three essential subunits: KdpA, KdpB and KdpC.

It is found in the cell inner membrane. In terms of biological role, part of the high-affinity ATP-driven potassium transport (or Kdp) system, which catalyzes the hydrolysis of ATP coupled with the electrogenic transport of potassium into the cytoplasm. This subunit acts as a catalytic chaperone that increases the ATP-binding affinity of the ATP-hydrolyzing subunit KdpB by the formation of a transient KdpB/KdpC/ATP ternary complex. The protein is Potassium-transporting ATPase KdpC subunit of Shigella flexneri serotype 5b (strain 8401).